The sequence spans 375 residues: Queuine tRNA-ribosyltransferase (375 aa).

The Proton acceptor role is filled by Asp89. Residues 89-93 (DSGGF), Asp143, Gln187, and Gly214 each bind substrate. Positions 245–251 (GVGKPED) are RNA binding. The active-site Nucleophile is the Asp264. The interval 269–273 (TRNAR) is RNA binding; important for wobble base 34 recognition. Zn(2+)-binding residues include Cys302, Cys304, Cys307, and His333.

Belongs to the queuine tRNA-ribosyltransferase family. In terms of assembly, homodimer. Within each dimer, one monomer is responsible for RNA recognition and catalysis, while the other monomer binds to the replacement base PreQ1. Zn(2+) is required as a cofactor.

The catalysed reaction is 7-aminomethyl-7-carbaguanine + guanosine(34) in tRNA = 7-aminomethyl-7-carbaguanosine(34) in tRNA + guanine. It functions in the pathway tRNA modification; tRNA-queuosine biosynthesis. Functionally, catalyzes the base-exchange of a guanine (G) residue with the queuine precursor 7-aminomethyl-7-deazaguanine (PreQ1) at position 34 (anticodon wobble position) in tRNAs with GU(N) anticodons (tRNA-Asp, -Asn, -His and -Tyr). Catalysis occurs through a double-displacement mechanism. The nucleophile active site attacks the C1' of nucleotide 34 to detach the guanine base from the RNA, forming a covalent enzyme-RNA intermediate. The proton acceptor active site deprotonates the incoming PreQ1, allowing a nucleophilic attack on the C1' of the ribose to form the product. After dissociation, two additional enzymatic reactions on the tRNA convert PreQ1 to queuine (Q), resulting in the hypermodified nucleoside queuosine (7-(((4,5-cis-dihydroxy-2-cyclopenten-1-yl)amino)methyl)-7-deazaguanosine). The sequence is that of Queuine tRNA-ribosyltransferase from Aliivibrio salmonicida (strain LFI1238) (Vibrio salmonicida (strain LFI1238)).